The primary structure comprises 764 residues: Plasma membrane fusion protein prm-1 (764 aa).

Residues 1–61 (MVYNEKNGGG…YLGLRARLSQ (61 aa)) are Extracellular-facing. The helical transmembrane segment at 62–82 (LWFNRWTILLILVLIRVIILT) threads the bilayer. The Cytoplasmic portion of the chain corresponds to 83 to 149 (ANLKENLGDA…LKMILTGVQA (67 aa)). Residues 150 to 170 (IIMFVINMYIGTFACLVAAFI) form a helical membrane-spanning segment. Topologically, residues 171 to 334 (HGGLHVATAV…SLITLVYKAK (164 aa)) are extracellular. Residues N271 and N315 are each glycosylated (N-linked (GlcNAc...) asparagine). Residues 335-355 (IAFLVVIIILALLAIFVMGYI) form a helical membrane-spanning segment. The Cytoplasmic segment spans residues 356–424 (EYRGFKRERE…AFAYATSLPA (69 aa)). The chain crosses the membrane as a helical span at residues 425-445 (LFVLSLAVAGMLSCLFQWVLL). At 446 to 624 (RQIEKKAPEL…NGVIQEALIT (179 aa)) the chain is on the extracellular side. N479, N508, and N527 each carry an N-linked (GlcNAc...) asparagine glycan. A helical transmembrane segment spans residues 625–645 (LGLFLTYVIVVLIGVMGALIG). Residues 646-764 (WATPGKTRGE…EKVPGYFTPI (119 aa)) are Cytoplasmic-facing. Disordered regions lie at residues 653 to 701 (RGEG…GGGG) and 735 to 754 (HQRT…PHGD).

The protein belongs to the PRM1 family.

The protein resides in the cell membrane. Its function is as follows. Involved in cell fusion during mating by stabilizing the plasma membrane fusion event. This is Plasma membrane fusion protein prm-1 (prm-1) from Neurospora crassa (strain ATCC 24698 / 74-OR23-1A / CBS 708.71 / DSM 1257 / FGSC 987).